We begin with the raw amino-acid sequence, 476 residues long: Ribulose bisphosphate carboxylase large chain (476 aa).

Positions 1-2 are excised as a propeptide; sequence MS. Pro3 is modified (N-acetylproline). Residue Lys14 is modified to N6,N6,N6-trimethyllysine. Residues Asn123 and Thr173 each coordinate substrate. The Proton acceptor role is filled by Lys175. Position 177 (Lys177) interacts with substrate. Mg(2+) is bound by residues Lys201, Asp203, and Glu204. N6-carboxylysine is present on Lys201. The active-site Proton acceptor is the His294. Arg295, His327, and Ser379 together coordinate substrate.

This sequence belongs to the RuBisCO large chain family. Type I subfamily. Heterohexadecamer of 8 large chains and 8 small chains; disulfide-linked. The disulfide link is formed within the large subunit homodimers. It depends on Mg(2+) as a cofactor. The disulfide bond which can form in the large chain dimeric partners within the hexadecamer appears to be associated with oxidative stress and protein turnover.

The protein localises to the plastid. It localises to the chloroplast. It catalyses the reaction 2 (2R)-3-phosphoglycerate + 2 H(+) = D-ribulose 1,5-bisphosphate + CO2 + H2O. It carries out the reaction D-ribulose 1,5-bisphosphate + O2 = 2-phosphoglycolate + (2R)-3-phosphoglycerate + 2 H(+). Its function is as follows. RuBisCO catalyzes two reactions: the carboxylation of D-ribulose 1,5-bisphosphate, the primary event in carbon dioxide fixation, as well as the oxidative fragmentation of the pentose substrate in the photorespiration process. Both reactions occur simultaneously and in competition at the same active site. This Phaseolus vulgaris (Kidney bean) protein is Ribulose bisphosphate carboxylase large chain.